Here is a 287-residue protein sequence, read N- to C-terminus: Bifunctional protein FolD (287 aa).

NADP(+) is bound by residues 160 to 162 (GRS), serine 189, and threonine 230.

It belongs to the tetrahydrofolate dehydrogenase/cyclohydrolase family. In terms of assembly, homodimer.

It carries out the reaction (6R)-5,10-methylene-5,6,7,8-tetrahydrofolate + NADP(+) = (6R)-5,10-methenyltetrahydrofolate + NADPH. The catalysed reaction is (6R)-5,10-methenyltetrahydrofolate + H2O = (6R)-10-formyltetrahydrofolate + H(+). It participates in one-carbon metabolism; tetrahydrofolate interconversion. Functionally, catalyzes the oxidation of 5,10-methylenetetrahydrofolate to 5,10-methenyltetrahydrofolate and then the hydrolysis of 5,10-methenyltetrahydrofolate to 10-formyltetrahydrofolate. This Chlamydia abortus (strain DSM 27085 / S26/3) (Chlamydophila abortus) protein is Bifunctional protein FolD.